The chain runs to 243 residues: Ribonuclease PH (243 aa).

Residues R84 and 122-124 (GTR) each bind phosphate.

It belongs to the RNase PH family. As to quaternary structure, homohexameric ring arranged as a trimer of dimers.

The catalysed reaction is tRNA(n+1) + phosphate = tRNA(n) + a ribonucleoside 5'-diphosphate. In terms of biological role, phosphorolytic 3'-5' exoribonuclease that plays an important role in tRNA 3'-end maturation. Removes nucleotide residues following the 3'-CCA terminus of tRNAs; can also add nucleotides to the ends of RNA molecules by using nucleoside diphosphates as substrates, but this may not be physiologically important. Probably plays a role in initiation of 16S rRNA degradation (leading to ribosome degradation) during starvation. This Bdellovibrio bacteriovorus (strain ATCC 15356 / DSM 50701 / NCIMB 9529 / HD100) protein is Ribonuclease PH.